The primary structure comprises 143 residues: HTH-type transcriptional regulator BudR (143 aa).

The region spanning Met1–Thr58 is the HTH lysR-type domain. Residues Phe18–Lys37 constitute a DNA-binding region (H-T-H motif).

Belongs to the LysR transcriptional regulatory family.

In terms of biological role, regulator of the budABC operon for 2,3-butanediol synthesis. In Klebsiella aerogenes (Enterobacter aerogenes), this protein is HTH-type transcriptional regulator BudR (budR).